Consider the following 256-residue polypeptide: Lysine-rich coiled-coil protein 1 (256 aa).

2 disordered regions span residues 62–84 and 144–256; these read RLPS…EDRV and TIDP…ILGF. A compositionally biased stretch (polar residues) spans 64–79; sequence PSGTNHSYPRSCSSSQ. Basic and acidic residues-rich tracts occupy residues 161–188 and 218–227; these read HVEE…DLNK and KTRDVSSKKE. Positions 209-247 form a coiled coil; sequence EKLKNRKEKKTRDVSSKKEDRKRRKEKKEQGEERTEEEM.

The polypeptide is Lysine-rich coiled-coil protein 1 (Krcc1) (Mus musculus (Mouse)).